We begin with the raw amino-acid sequence, 675 residues long: Envelope glycoprotein (675 aa).

Positions 1 to 34 (MACSTLPKSPKDKIDPRDLLIPLILFLSLKGARS) are cleaved as a signal peptide. Positions 35 to 270 (AAPGSSPHQV…RYQNLGPRVP (236 aa)) are receptor-binding domain (RBD). Residues 35-620 (AAPGSSPHQV…FNRSPWFTTL (586 aa)) lie on the Extracellular side of the membrane. Asn-46 is a glycosylation site (N-linked (GlcNAc...) asparagine; by host). Disulfide bonds link Cys-80/Cys-132, Cys-106/Cys-121, Cys-107/Cys-117, Cys-155/Cys-175, and Cys-167/Cys-180. His-89 provides a ligand contact to Zn(2+). Asp-120 lines the Zn(2+) pocket. A glycan (N-linked (GlcNAc...) asparagine; by host) is linked at Asn-202. Residues Cys-212 and Cys-218 are joined by a disulfide bond. The disordered stretch occupies residues 276-323 (VLADQLSLPRPNPLPKPAKSPPASNSTPTLISPSPTPTQPPPAGTGDR). Positions 285–295 (RPNPLPKPAKS) are enriched in pro residues. Low complexity predominate over residues 296 to 308 (PPASNSTPTLISP). The span at 309 to 318 (SPTPTQPPPA) shows a compositional bias: pro residues. The N-linked (GlcNAc...) asparagine; by host glycan is linked to Asn-336. Disulfide bonds link Cys-346/Cys-349, Cys-346/Cys-573, Cys-376/Cys-430, Cys-395/Cys-407, Cys-437/Cys-450, and Cys-565/Cys-572. The CXXC motif lies at 346–349 (CWLC). N-linked (GlcNAc...) asparagine; by host glycosylation is found at Asn-368 and Asn-375. 2 N-linked (GlcNAc...) asparagine; by host glycosylation sites follow: Asn-408 and Asn-444. Positions 482–502 (VSLTLALLLGGLTMGGIAAGV) are fusion peptide. Positions 513–547 (QQFQQLHAAVQDDLKEVEKSITNLEKSLTSLSEVV) form a coiled coil. Residues 548–564 (LQNRRGLDLLFLKEGGL) are immunosuppression. A CX6CC motif is present at residues 565–573 (CAALKEECC). Residues 621–641 (ISTIMGPLIILLLILLFGPCI) traverse the membrane as a helical segment. The S-palmitoyl cysteine; by host moiety is linked to residue Cys-640. The Cytoplasmic portion of the chain corresponds to 642–675 (LNRLVQFVKDRISVVQALVLTQQYHQLKPLEYEP). Positions 665–668 (YHQL) match the YXXL motif; contains endocytosis signal motif.

The mature envelope protein (Env) consists of a trimer of SU-TM heterodimers attached by a labile interchain disulfide bond. Post-translationally, specific enzymatic cleavages in vivo yield mature proteins. Envelope glycoproteins are synthesized as an inactive precursor that is N-glycosylated and processed likely by host cell furin or by a furin-like protease in the Golgi to yield the mature SU and TM proteins. The cleavage site between SU and TM requires the minimal sequence [KR]-X-[KR]-R. The R-peptide is released from the C-terminus of the cytoplasmic tail of the TM protein upon particle formation as a result of proteolytic cleavage by the viral protease. Cleavage of this peptide is required for TM to become fusogenic. In terms of processing, the CXXC motif is highly conserved across a broad range of retroviral envelope proteins. It is thought to participate in the formation of a labile disulfide bond possibly with the CX6CC motif present in the transmembrane protein. Isomerization of the intersubunit disulfide bond to an SU intrachain disulfide bond is thought to occur upon receptor recognition in order to allow membrane fusion. The transmembrane protein is palmitoylated. Post-translationally, the R-peptide is palmitoylated.

The protein resides in the virion membrane. It is found in the host cell membrane. Its function is as follows. The surface protein (SU) attaches the virus to the host cell by binding to its receptor. This interaction triggers the refolding of the transmembrane protein (TM) and is thought to activate its fusogenic potential by unmasking its fusion peptide. Fusion occurs at the host cell plasma membrane. Functionally, the transmembrane protein (TM) acts as a class I viral fusion protein. Under the current model, the protein has at least 3 conformational states: pre-fusion native state, pre-hairpin intermediate state, and post-fusion hairpin state. During viral and target cell membrane fusion, the coiled coil regions (heptad repeats) assume a trimer-of-hairpins structure, positioning the fusion peptide in close proximity to the C-terminal region of the ectodomain. The formation of this structure appears to drive apposition and subsequent fusion of viral and target cell membranes. Membranes fusion leads to delivery of the nucleocapsid into the cytoplasm. This chain is Envelope glycoprotein (env), found in Mus musculus (Mouse).